A 122-amino-acid chain; its full sequence is Urocortin (122 aa).

A signal peptide spans Met1–Gln25. Residues Trp26–Arg80 constitute a propeptide that is removed on maturation. Val120 is modified (valine amide).

It belongs to the sauvagine/corticotropin-releasing factor/urotensin I family. As to quaternary structure, interacts with CRHR1 and CRHR2 (via their N-terminal extracellular domain). In terms of tissue distribution, in the organ of Corti, detected in the inner hair cell region (at protein level). Expressed in skin (at protein level).

It localises to the secreted. In terms of biological role, acts in vitro to stimulate the secretion of adrenocorticotropic hormone (ACTH). Binds with high affinity to CRF receptor types 1, 2-alpha, and 2-beta. Plays a role in the establishment of normal hearing thresholds. Reduces food intake and regulates ghrelin levels in gastric body and plasma. The protein is Urocortin (Ucn) of Mus musculus (Mouse).